The chain runs to 310 residues: MSQAIVVAALYKFVTLEDYVELREPLLKTMLDNNVKGTLLLAHEGINGTVSGTREGIDGLLAWLRNDPRLVDVDHKESYCDEQPFYRTKVKLKKEIVTLGVPGVDPNQAVGTYVEPKDWNALISDPEVLLIDTRNDYEVAIGTFKGAIDPKTETFREFPEYIKANFDPSKHKKVAMFCTGGIRCEKASSYMLGEGFESVYHLKGGILKYFEEVPQEESLWDGDCFVFDNRVTVRHDLSEGEYDQCHACRHPINAEERASEHYSPGVSCPHCWDSLSEKTRRSAIDRQKQIELAKARNLPHPIGYNYKAEA.

The Rhodanese domain maps to 124–218 (SDPEVLLIDT…YFEEVPQEES (95 aa)). C178 acts as the Cysteine persulfide intermediate in catalysis.

It belongs to the TrhO family.

It catalyses the reaction uridine(34) in tRNA + AH2 + O2 = 5-hydroxyuridine(34) in tRNA + A + H2O. Catalyzes oxygen-dependent 5-hydroxyuridine (ho5U) modification at position 34 in tRNAs. The sequence is that of tRNA uridine(34) hydroxylase from Pseudomonas putida (strain ATCC 700007 / DSM 6899 / JCM 31910 / BCRC 17059 / LMG 24140 / F1).